A 248-amino-acid chain; its full sequence is Exosome complex component Rrp41 (248 aa).

The protein belongs to the RNase PH family. Rrp41 subfamily. In terms of assembly, component of the archaeal exosome complex. Forms a hexameric ring-like arrangement composed of 3 Rrp41-Rrp42 heterodimers. The hexameric ring associates with a trimer of Rrp4 and/or Csl4 subunits.

The protein resides in the cytoplasm. Its function is as follows. Catalytic component of the exosome, which is a complex involved in RNA degradation. Has 3'-&gt;5' exoribonuclease activity. Can also synthesize heteromeric RNA-tails. Binds RNA. This is Exosome complex component Rrp41 from Saccharolobus solfataricus (strain ATCC 35092 / DSM 1617 / JCM 11322 / P2) (Sulfolobus solfataricus).